Consider the following 234-residue polypeptide: Sugar fermentation stimulation protein homolog (234 aa).

The protein belongs to the SfsA family.

In Shewanella pealeana (strain ATCC 700345 / ANG-SQ1), this protein is Sugar fermentation stimulation protein homolog.